A 184-amino-acid polypeptide reads, in one-letter code: ATP synthase subunit delta (184 aa).

It belongs to the ATPase delta chain family. In terms of assembly, F-type ATPases have 2 components, F(1) - the catalytic core - and F(0) - the membrane proton channel. F(1) has five subunits: alpha(3), beta(3), gamma(1), delta(1), epsilon(1). F(0) has three main subunits: a(1), b(2) and c(10-14). The alpha and beta chains form an alternating ring which encloses part of the gamma chain. F(1) is attached to F(0) by a central stalk formed by the gamma and epsilon chains, while a peripheral stalk is formed by the delta and b chains.

The protein resides in the cell inner membrane. Its function is as follows. F(1)F(0) ATP synthase produces ATP from ADP in the presence of a proton or sodium gradient. F-type ATPases consist of two structural domains, F(1) containing the extramembraneous catalytic core and F(0) containing the membrane proton channel, linked together by a central stalk and a peripheral stalk. During catalysis, ATP synthesis in the catalytic domain of F(1) is coupled via a rotary mechanism of the central stalk subunits to proton translocation. In terms of biological role, this protein is part of the stalk that links CF(0) to CF(1). It either transmits conformational changes from CF(0) to CF(1) or is implicated in proton conduction. The sequence is that of ATP synthase subunit delta from Rickettsia canadensis (strain McKiel).